Here is a 404-residue protein sequence, read N- to C-terminus: Acetate kinase (404 aa).

Asparagine 8 serves as a coordination point for Mg(2+). An ATP-binding site is contributed by lysine 15. Arginine 92 serves as a coordination point for substrate. Aspartate 149 (proton donor/acceptor) is an active-site residue. Residues 207–211 (HLGSG), 282–284 (DMR), and 327–331 (GIGEN) contribute to the ATP site. Glutamate 378 contacts Mg(2+).

It belongs to the acetokinase family. As to quaternary structure, homodimer. The cofactor is Mg(2+). Requires Mn(2+) as cofactor.

It is found in the cytoplasm. The enzyme catalyses acetate + ATP = acetyl phosphate + ADP. It functions in the pathway metabolic intermediate biosynthesis; acetyl-CoA biosynthesis; acetyl-CoA from acetate: step 1/2. Functionally, catalyzes the formation of acetyl phosphate from acetate and ATP. Can also catalyze the reverse reaction. The protein is Acetate kinase of Nitrobacter hamburgensis (strain DSM 10229 / NCIMB 13809 / X14).